A 75-amino-acid chain; its full sequence is MQKRHTFNTAQVMRRAEELIEASSNRYRITVQVANRAKKRRRLDNDDLEEGGMKAVMQAIVEMSDELAQPEIIGD.

This sequence belongs to the RNA polymerase subunit omega family. In cyanobacteria the RNAP catalytic core is composed of 2 alpha, 1 beta, 1 beta', 1 gamma and 1 omega subunit. When a sigma factor is associated with the core the holoenzyme is formed, which can initiate transcription.

The enzyme catalyses RNA(n) + a ribonucleoside 5'-triphosphate = RNA(n+1) + diphosphate. Functionally, promotes RNA polymerase assembly. Latches the N- and C-terminal regions of the beta' subunit thereby facilitating its interaction with the beta and alpha subunits. This is DNA-directed RNA polymerase subunit omega from Cyanothece sp. (strain PCC 7425 / ATCC 29141).